The primary structure comprises 360 residues: Peptide chain release factor 1 (360 aa).

Gln237 carries the post-translational modification N5-methylglutamine.

It belongs to the prokaryotic/mitochondrial release factor family. In terms of processing, methylated by PrmC. Methylation increases the termination efficiency of RF1.

It is found in the cytoplasm. Its function is as follows. Peptide chain release factor 1 directs the termination of translation in response to the peptide chain termination codons UAG and UAA. This chain is Peptide chain release factor 1, found in Stutzerimonas stutzeri (strain A1501) (Pseudomonas stutzeri).